Here is a 478-residue protein sequence, read N- to C-terminus: 3-isopropylmalate dehydratase large subunit (478 aa).

The [4Fe-4S] cluster site is built by cysteine 359, cysteine 417, and cysteine 420.

Belongs to the aconitase/IPM isomerase family. LeuC type 1 subfamily. In terms of assembly, heterodimer of LeuC and LeuD. It depends on [4Fe-4S] cluster as a cofactor.

The catalysed reaction is (2R,3S)-3-isopropylmalate = (2S)-2-isopropylmalate. It participates in amino-acid biosynthesis; L-leucine biosynthesis; L-leucine from 3-methyl-2-oxobutanoate: step 2/4. In terms of biological role, catalyzes the isomerization between 2-isopropylmalate and 3-isopropylmalate, via the formation of 2-isopropylmaleate. The polypeptide is 3-isopropylmalate dehydratase large subunit (Anaeromyxobacter sp. (strain Fw109-5)).